The primary structure comprises 551 residues: RCC1 and BTB domain-containing protein 2 (551 aa).

RCC1 repeat units lie at residues 64–115 (NDEI…VLAT), 117–169 (DGEV…VLTS), 171–222 (GEVF…AVVD), 223–274 (TGEV…VLTD), 276–326 (GQIY…AAKS), and 328–382 (GGHV…TVAE). The region spanning 394–457 (ADLKFLVDGK…LYTDNISLPP (64 aa)) is the BTB domain.

The protein resides in the cytoplasmic vesicle. It is found in the secretory vesicle. It localises to the acrosome. The polypeptide is RCC1 and BTB domain-containing protein 2 (Rcbtb2) (Rattus norvegicus (Rat)).